The following is an 881-amino-acid chain: Alanine--tRNA ligase (881 aa).

Positions 566, 570, 668, and 672 each coordinate Zn(2+).

The protein belongs to the class-II aminoacyl-tRNA synthetase family. Zn(2+) is required as a cofactor.

Its subcellular location is the cytoplasm. The catalysed reaction is tRNA(Ala) + L-alanine + ATP = L-alanyl-tRNA(Ala) + AMP + diphosphate. In terms of biological role, catalyzes the attachment of alanine to tRNA(Ala) in a two-step reaction: alanine is first activated by ATP to form Ala-AMP and then transferred to the acceptor end of tRNA(Ala). Also edits incorrectly charged Ser-tRNA(Ala) and Gly-tRNA(Ala) via its editing domain. The polypeptide is Alanine--tRNA ligase (Frankia alni (strain DSM 45986 / CECT 9034 / ACN14a)).